The primary structure comprises 496 residues: Probable CtpA-like serine protease (496 aa).

Residues 1–16 (MDDKQHTSSSDDERAE) show a composition bias toward basic and acidic residues. The disordered stretch occupies residues 1–27 (MDDKQHTSSSDDERAEIATSNQDQQTN). Over residues 18–27 (ATSNQDQQTN) the composition is skewed to polar residues. A helical membrane pass occupies residues 39-59 (FISILIGTILITAVITVVAYI). A PDZ domain is found at 124–206 (TKSFNEGVSG…TEVTLTVQRG (83 aa)). Active-site charge relay system residues include Ser-329, Asp-340, and Lys-354.

It belongs to the peptidase S41A family.

The protein resides in the cell membrane. The sequence is that of Probable CtpA-like serine protease from Staphylococcus aureus (strain bovine RF122 / ET3-1).